The following is a 316-amino-acid chain: tRNA dimethylallyltransferase (316 aa).

Residue 17–24 (GPTASGKT) participates in ATP binding. Substrate is bound at residue 19–24 (TASGKT). Interaction with substrate tRNA regions lie at residues 42 to 45 (DSAL), 166 to 170 (QRLSR), and 247 to 252 (RCVGYR).

It belongs to the IPP transferase family. As to quaternary structure, monomer. Mg(2+) is required as a cofactor.

The catalysed reaction is adenosine(37) in tRNA + dimethylallyl diphosphate = N(6)-dimethylallyladenosine(37) in tRNA + diphosphate. Its function is as follows. Catalyzes the transfer of a dimethylallyl group onto the adenine at position 37 in tRNAs that read codons beginning with uridine, leading to the formation of N6-(dimethylallyl)adenosine (i(6)A). This is tRNA dimethylallyltransferase from Salmonella enteritidis PT4 (strain P125109).